The sequence spans 1149 residues: Eukaryotic translation initiation factor 3 subunit A (1149 aa).

Residues isoleucine 317–serine 498 form the PCI domain. Disordered stretches follow at residues aspartate 496–proline 515 and glutamate 811–arginine 1149. Over residues glutamate 811–glycine 885 the composition is skewed to basic and acidic residues. Gly residues predominate over residues glycine 886 to arginine 895. The span at alanine 908–alanine 924 shows a compositional bias: basic and acidic residues. Over residues proline 925 to alanine 937 the composition is skewed to low complexity. 3 stretches are compositionally biased toward basic and acidic residues: residues arginine 961–proline 970, glycine 1005–glycine 1095, and glutamate 1113–arginine 1132.

It belongs to the eIF-3 subunit A family. Component of the eukaryotic translation initiation factor 3 (eIF-3) complex.

It localises to the cytoplasm. Functionally, RNA-binding component of the eukaryotic translation initiation factor 3 (eIF-3) complex, which is involved in protein synthesis of a specialized repertoire of mRNAs and, together with other initiation factors, stimulates binding of mRNA and methionyl-tRNAi to the 40S ribosome. The eIF-3 complex specifically targets and initiates translation of a subset of mRNAs involved in cell proliferation. The polypeptide is Eukaryotic translation initiation factor 3 subunit A (Culex quinquefasciatus (Southern house mosquito)).